The following is a 197-amino-acid chain: Guanylate kinase (197 aa).

The region spanning 7 to 185 (GLIIILSSPS…TLKKIHEIIV (179 aa)) is the Guanylate kinase-like domain. 14-21 (SPSGTGKS) contacts ATP.

This sequence belongs to the guanylate kinase family.

The protein resides in the cytoplasm. The catalysed reaction is GMP + ATP = GDP + ADP. Essential for recycling GMP and indirectly, cGMP. The chain is Guanylate kinase (gmk) from Rickettsia prowazekii (strain Madrid E).